Reading from the N-terminus, the 138-residue chain is Putative nickel-responsive regulator (138 aa).

4 residues coordinate Ni(2+): histidine 78, histidine 89, histidine 91, and cysteine 97.

The protein belongs to the transcriptional regulatory CopG/NikR family. Ni(2+) serves as cofactor.

Its function is as follows. Transcriptional regulator. In Pyrococcus horikoshii (strain ATCC 700860 / DSM 12428 / JCM 9974 / NBRC 100139 / OT-3), this protein is Putative nickel-responsive regulator.